We begin with the raw amino-acid sequence, 161 residues long: Large ribosomal subunit protein uL15 (161 aa).

A disordered region spans residues 1–39 (MTKLNELAPREGSTKGRMRVGRGPGSGKGKTAGRGVKGQ). Gly residues predominate over residues 22–36 (RGPGSGKGKTAGRGV).

The protein belongs to the universal ribosomal protein uL15 family. In terms of assembly, part of the 50S ribosomal subunit.

In terms of biological role, binds to the 23S rRNA. The polypeptide is Large ribosomal subunit protein uL15 (Caulobacter vibrioides (strain ATCC 19089 / CIP 103742 / CB 15) (Caulobacter crescentus)).